A 690-amino-acid chain; its full sequence is Cysteine-rich receptor-like protein kinase 21 (690 aa).

An N-terminal signal peptide occupies residues 1 to 24 (MQKNKMVDLRAIFWFVVISSCAVA). A Gnk2-homologous 1 domain is found at 25 to 129 (APTCIQRSDF…CLVRYSNHLI (105 aa)). Residues 25–281 (APTCIQRSDF…KDGKNISTGS (257 aa)) lie on the Extracellular side of the membrane. 6 N-linked (GlcNAc...) asparagine glycosylation sites follow: asparagine 130, asparagine 148, asparagine 155, asparagine 220, asparagine 268, and asparagine 276. The 107-residue stretch at 140–246 (AEYIEYKYNT…CFMRWDLQPF (107 aa)) folds into the Gnk2-homologous 2 domain. The helical transmembrane segment at 282 to 302 (IVAIAVVSVVVSTVLLALGYA) threads the bilayer. Residues 303-690 (VSRRRKAYQS…DASITSVRPR (388 aa)) are Cytoplasmic-facing. Residues 363–640 (FHKSNKLGHG…IFRMLTNVSI (278 aa)) enclose the Protein kinase domain. ATP contacts are provided by residues 369 to 377 (LGHGGFGAV) and lysine 391. Phosphotyrosine is present on tyrosine 436. Aspartate 488 serves as the catalytic Proton acceptor. Serine 492 is subject to Phosphoserine. Phosphothreonine is present on threonine 528. Phosphotyrosine is present on tyrosine 536.

It belongs to the protein kinase superfamily. Ser/Thr protein kinase family. CRK subfamily.

It is found in the membrane. It catalyses the reaction L-seryl-[protein] + ATP = O-phospho-L-seryl-[protein] + ADP + H(+). The enzyme catalyses L-threonyl-[protein] + ATP = O-phospho-L-threonyl-[protein] + ADP + H(+). The chain is Cysteine-rich receptor-like protein kinase 21 (CRK21) from Arabidopsis thaliana (Mouse-ear cress).